The chain runs to 128 residues: uncharacterized protein (128 aa).

This is an uncharacterized protein from Escherichia coli (Bacteriophage T6).